A 429-amino-acid chain; its full sequence is Trigger factor (429 aa).

Positions 161 to 246 (GDRLSIDFKG…INEIASPKEL (86 aa)) constitute a PPIase FKBP-type domain.

This sequence belongs to the FKBP-type PPIase family. Tig subfamily.

Its subcellular location is the cytoplasm. The enzyme catalyses [protein]-peptidylproline (omega=180) = [protein]-peptidylproline (omega=0). In terms of biological role, involved in protein export. Acts as a chaperone by maintaining the newly synthesized protein in an open conformation. Functions as a peptidyl-prolyl cis-trans isomerase. This chain is Trigger factor, found in Vesicomyosocius okutanii subsp. Calyptogena okutanii (strain HA).